The primary structure comprises 58 residues: UPF0391 membrane protein Plav_0056 (58 aa).

The next 2 membrane-spanning stretches (helical) occupy residues 4-24 and 30-50; these read WAAV…GGLV and IAQI…IFGV.

The protein belongs to the UPF0391 family.

The protein resides in the cell membrane. This is UPF0391 membrane protein Plav_0056 from Parvibaculum lavamentivorans (strain DS-1 / DSM 13023 / NCIMB 13966).